The primary structure comprises 1872 residues: Chitin synthase 6 (1872 aa).

The segment at 1–23 (MAQHLPPVGGNGGAHTQPSLPAL) is disordered. Residues 1–779 (MAQHLPPVGG…CWMEIAQLSD (779 aa)) form the Myosin motor domain. 104–111 (GESGSGKT) is an ATP binding site. Asn123, Asn291, Asn428, and Asn559 each carry an N-linked (GlcNAc...) asparagine glycan. Positions 587-652 (VMQASVSSKP…VNKPSEEGAS (66 aa)) are disordered. The tract at residues 659-683 (LDNVTKSFHAQNTNAYFVFCLKPND) is actin-binding. Asn661 carries an N-linked (GlcNAc...) asparagine glycan. 2 consecutive transmembrane segments (helical) span residues 881-901 (WVFI…QHLG) and 920-940 (FIIW…PMLV). In terms of domain architecture, Cytochrome b5 heme-binding spans 944–1003 (QYVFTGEELSAYNGKDGKASYAAIRGQVFDIGSFIPRHPLPYLPSKLFTQYAGTDITGLF). 3 N-linked (GlcNAc...) asparagine glycosylation sites follow: Asn1030, Asn1055, and Asn1120. The chain crosses the membrane as a helical span at residues 1193-1213 (FILAVTIILCSIIAFKFLAAL). Asn1450 and Asn1556 each carry an N-linked (GlcNAc...) asparagine glycan. 3 consecutive transmembrane segments (helical) span residues 1581 to 1601 (FIVF…AYIV), 1614 to 1634 (VPVL…IIFI), and 1641 to 1661 (MIAW…GLPL). A DEK-C domain is found at 1814-1869 (LPSDDALLAEIREILRTADLMTVTKKGVKQELERRFGVNLDSRRAYINSATEALLS).

The protein belongs to the chitin synthase family. Class V subfamily.

The protein resides in the cell membrane. It catalyses the reaction [(1-&gt;4)-N-acetyl-beta-D-glucosaminyl](n) + UDP-N-acetyl-alpha-D-glucosamine = [(1-&gt;4)-N-acetyl-beta-D-glucosaminyl](n+1) + UDP + H(+). Functionally, polymerizes chitin, a structural polymer of the cell wall and septum, by transferring the sugar moiety of UDP-GlcNAc to the non-reducing end of the growing chitin polymer. Required for appressorium penetration and invasive growth. The chain is Chitin synthase 6 from Pyricularia oryzae (strain 70-15 / ATCC MYA-4617 / FGSC 8958) (Rice blast fungus).